Consider the following 3953-residue polypeptide: Zinc finger protein 469 (3953 aa).

Disordered regions lie at residues 1–274 (MPGE…VSFQ), 313–465 (WPEE…MFFN), 512–672 (EWQG…FPFP), 763–784 (GHQR…RVPA), 869–1383 (ADEE…HSEL), 1400–1461 (PKPS…DLPV), 1575–1610 (LQRS…SQRR), 1703–1864 (SKTG…GASS), 1884–1947 (VSNT…TVEG), 1991–2030 (KTQG…TGPT), 2070–2700 (LTAA…TLGP), 2716–2915 (AGET…LSDS), 3001–3036 (EMPA…PGNT), and 3072–3110 (GPSF…PAKG). The segment covering 187-198 (PPSSFTSTNYTS) has biased composition (polar residues). Composition is skewed to pro residues over residues 202–211 (TPRPPAPGPP) and 324–335 (YPLPTQPAPSPL). The span at 603–623 (STCSSLSPMSSSPANPSSEES) shows a compositional bias: low complexity. Composition is skewed to pro residues over residues 768–780 (PGPP…PAAP) and 896–911 (KAPP…PQTP). A compositionally biased stretch (basic residues) spans 944 to 953 (QQRRGKQLKL). Gly residues predominate over residues 963-975 (AAEGSGSGGGGRA). Positions 981 to 991 (RRNDGLGERPP) are enriched in basic and acidic residues. Positions 1005 to 1017 (RADPAPRVPRAAA) are enriched in low complexity. Composition is skewed to basic residues over residues 1025–1042 (SRRR…RKAR) and 1058–1070 (KNRR…RRAG). Positions 1082–1093 (PGAEDRRLREYD) are enriched in basic and acidic residues. Residues 1094–1103 (FASESEEDEQ) show a composition bias toward acidic residues. A compositionally biased stretch (basic and acidic residues) spans 1120–1137 (KRKEVELTQGPREDEPQK). Residues 1158 to 1177 (PGGSRPGPGRSPQARGPSRS) are compositionally biased toward low complexity. The span at 1213 to 1229 (EETRPSLDFPQEAKEPE) shows a compositional bias: basic and acidic residues. Polar residues-rich tracts occupy residues 1278-1290 (PKPS…TAPH) and 1333-1350 (NPSS…SKIS). A compositionally biased stretch (basic and acidic residues) spans 1577 to 1595 (RSKDTRGAPRELAEAESVG). 2 stretches are compositionally biased toward polar residues: residues 1991–2005 (KTQG…QPEN) and 2014–2024 (NHASVNASPKT). A compositionally biased stretch (basic and acidic residues) spans 2243–2262 (DTPKDSTLRIPEDSRKEKLW). Residues 2409-2435 (TAPSSTASDFQSDSPQSHRNASHQTPQ) are compositionally biased toward polar residues. The C2H2-type 1 zinc-finger motif lies at 2472–2498 (VTCEVCAASFRSGPGLSRHKARKHRPH). Over residues 2488-2498 (SRHKARKHRPH) the composition is skewed to basic residues. The span at 2506 to 2521 (SPAALPAQQPLEPLAQ) shows a compositional bias: low complexity. Residues 2534 to 2546 (SGKERPNHSRGDP) are compositionally biased toward basic and acidic residues. Over residues 2565–2574 (PGSPHSQQLH) the composition is skewed to low complexity. A compositionally biased stretch (basic and acidic residues) spans 2592 to 2631 (PRPDQAREDELHPKQAEKREGRRWRREPTVDSPSHSEGKS). The span at 2632–2642 (NKKRGKLRGRR) shows a compositional bias: basic residues. Over residues 2664 to 2676 (PSPAMASYAASPS) the composition is skewed to low complexity. Residues 2777-2787 (DSSRAHSRSEE) show a composition bias toward basic and acidic residues. Positions 2805–2816 (TSSSPADSTTSS) are enriched in low complexity. Positions 2869-2879 (LTRKRNPHVYG) are enriched in basic residues. Low complexity predominate over residues 3095 to 3105 (AAGAGRAQGRG). The C2H2-type 2 zinc finger occupies 3115–3137 (YKCKVCFQRFRSLGELDLHKLAH). A disordered region spans residues 3232–3322 (TEPAPKHHRG…PDPWAGGEPL (91 aa)). Over residues 3260–3272 (GEAKKDSPGERAK) the composition is skewed to basic and acidic residues. The segment covering 3302 to 3314 (PGPPRTTPSPSPD) has biased composition (pro residues). C2H2-type zinc fingers lie at residues 3337-3359 (RDCH…LAVH) and 3365-3388 (YLCP…GGAH). A C2H2-type 5; degenerate zinc finger spans residues 3418–3442 (FACSSCNYTFAKKEQFDRHMNKHLR). Disordered stretches follow at residues 3448 to 3501 (FAFR…PILS), 3518 to 3559 (STTK…SPFP), and 3576 to 3925 (ERPE…HRTA). Over residues 3584 to 3602 (PGSPGPLLQQALPLGASLP) the composition is skewed to low complexity. Residues 3633–3651 (CAPDHFQEDHLLQKEKEVS) show a composition bias toward basic and acidic residues. 2 stretches are compositionally biased toward low complexity: residues 3728–3741 (PGPS…PRPG) and 3749–3759 (QPQPASGQLQS). Composition is skewed to basic and acidic residues over residues 3876-3892 (EQRK…DRLG) and 3915-3925 (EPAEPHTHRTA).

This sequence belongs to the krueppel C2H2-type zinc-finger protein family. In terms of tissue distribution, detected in cornea, sclera, skin fibroblasts and striated muscle.

The protein localises to the nucleus. Its function is as follows. May be involved in transcriptional regulation. This Homo sapiens (Human) protein is Zinc finger protein 469 (ZNF469).